Here is a 787-residue protein sequence, read N- to C-terminus: Bifunctional dethiobiotin synthetase/adenosylmethionine-8-amino-7-oxononanoate aminotransferase (787 aa).

Position 23–28 (23–28 (DVGKTI)) interacts with ATP. Threonine 27 provides a ligand contact to Mg(2+). Residue threonine 54 participates in substrate binding. The Mg(2+) site is built by aspartate 61 and glutamate 123. Residues 123 to 126 (ETAG) and 184 to 185 (KD) contribute to the ATP site. Residue 323–324 (WW) coordinates (8S)-8-amino-7-oxononanoate. 384–385 (GS) serves as a coordination point for pyridoxal 5'-phosphate. Residue tyrosine 421 coordinates (8S)-8-amino-7-oxononanoate. Aspartate 582 is a pyridoxal 5'-phosphate binding site. (8S)-8-amino-7-oxononanoate-binding residues include lysine 611 and glycine 645. Position 646–647 (646–647 (HS)) interacts with pyridoxal 5'-phosphate. Arginine 756 contributes to the (8S)-8-amino-7-oxononanoate binding site.

In the N-terminal section; belongs to the dethiobiotin synthetase family. This sequence in the C-terminal section; belongs to the class-III pyridoxal-phosphate-dependent aminotransferase family. BioA subfamily. In terms of assembly, homodimer. Requires Mg(2+) as cofactor. The cofactor is pyridoxal 5'-phosphate.

The protein localises to the mitochondrion matrix. It carries out the reaction (7R,8S)-7,8-diammoniononanoate + CO2 + ATP = (4R,5S)-dethiobiotin + ADP + phosphate + 3 H(+). It catalyses the reaction (8S)-8-amino-7-oxononanoate + S-adenosyl-L-methionine = S-adenosyl-4-methylsulfanyl-2-oxobutanoate + (7R,8S)-7,8-diammoniononanoate. The protein operates within cofactor biosynthesis; biotin biosynthesis; biotin from 7,8-diaminononanoate: step 1/2. Its pathway is cofactor biosynthesis; biotin biosynthesis; 7,8-diaminononanoate from 8-amino-7-oxononanoate (SAM route): step 1/1. Bifunctional enzyme; part of the cluster involved in the biosynthesis of biotin (also known as vitamin B8 or vitamin H), a water-soluble vitamin that functions as a prosthetic group of many carboxylases, such as acetyl-CoA carboxylase and pyruvate carboxylase. Catalyzes a mechanistically unusual reaction, the ATP-dependent insertion of CO2 between the N7 and N8 nitrogen atoms of 7,8-diaminopelargonic acid (DAPA) to form an ureido ring. Also catalyzes the transfer of the alpha-amino group from S-adenosyl-L-methionine (SAM) to 7-keto-8-aminopelargonic acid (KAPA) to form 7,8-diaminopelargonic acid (DAPA). It is the only animotransferase known to utilize SAM as an amino donor. The protein is Bifunctional dethiobiotin synthetase/adenosylmethionine-8-amino-7-oxononanoate aminotransferase of Emericella nidulans (strain FGSC A4 / ATCC 38163 / CBS 112.46 / NRRL 194 / M139) (Aspergillus nidulans).